We begin with the raw amino-acid sequence, 797 residues long: GDH/6PGL endoplasmic bifunctional protein (797 aa).

Positions 1 to 24 (MKCPGVWGMLTVTMCVVFLGCPQA) are cleaved as a signal peptide. The residue at position 25 (Q25) is a Pyrrolidone carboxylic acid. The segment at 25–531 (QELQGHVSVI…SGSHLSFSLG (507 aa)) is hexose-6-phosphate dehydrogenase. Residues 37 to 44 (GATGDLAK) and Y154 contribute to the NADP(+) site. N162 carries an N-linked (GlcNAc...) asparagine glycan. Residue K179 participates in NADP(+) binding. Residues K179, 209–213 (HYLGK), E248, and D267 contribute to the D-glucose 6-phosphate site. At K213 the chain carries N6-succinyllysine. The active-site Proton acceptor is the H272. A glycan (N-linked (GlcNAc...) asparagine) is linked at N287. D-glucose 6-phosphate is bound by residues K365 and R370. An NADP(+)-binding site is contributed by R375. The interval 532-545 (QPEQLVPGPGSTPR) is linker. The interval 546–797 (PSDFQVLGAK…WYMDYEAFLG (252 aa)) is 6-phosphogluconolactonase. W623 is an NADP(+) binding site. The N-linked (GlcNAc...) asparagine glycan is linked to N689.

This sequence in the N-terminal section; belongs to the glucose-6-phosphate dehydrogenase family. The protein in the C-terminal section; belongs to the glucosamine/galactosamine-6-phosphate isomerase family. 6-phosphogluconolactonase subfamily. As to quaternary structure, homodimer.

Its subcellular location is the endoplasmic reticulum lumen. It catalyses the reaction D-glucose 6-phosphate + NAD(+) = 6-phospho-D-glucono-1,5-lactone + NADH + H(+). The catalysed reaction is D-glucose 6-phosphate + NADP(+) = 6-phospho-D-glucono-1,5-lactone + NADPH + H(+). It carries out the reaction 6-phospho-D-glucono-1,5-lactone + H2O = 6-phospho-D-gluconate + H(+). The enzyme catalyses 2-deoxy-D-glucose 6-phosphate + NAD(+) = 2-deoxy-6-phospho-D-glucono-1,5-lactone + NADH + H(+). It catalyses the reaction 2-deoxy-D-glucose 6-phosphate + NADP(+) = 2-deoxy-6-phospho-D-glucono-1,5-lactone + NADPH + H(+). The catalysed reaction is D-galactose 6-phosphate + NADP(+) = 6-phospho-D-galactono-1,5-lactone + NADPH + H(+). It carries out the reaction D-galactose 6-phosphate + NAD(+) = 6-phospho-D-galactono-1,5-lactone + NADH + H(+). The enzyme catalyses D-glucosamine 6-phosphate + NADP(+) = 2-amino-2-deoxy-6-phospho-D-glucono-1,5-lactone + NADPH + 2 H(+). It catalyses the reaction D-glucose + NAD(+) = D-glucono-1,5-lactone + NADH + H(+). The catalysed reaction is D-glucose + NADP(+) = D-glucono-1,5-lactone + NADPH + H(+). It carries out the reaction D-glucose 6-sulfate + NADP(+) = 6-sulfo-D-glucono-1,5-lactone + NADPH + H(+). It functions in the pathway carbohydrate degradation; pentose phosphate pathway; D-ribulose 5-phosphate from D-glucose 6-phosphate (oxidative stage). It participates in carbohydrate degradation; pentose phosphate pathway; D-ribulose 5-phosphate from D-glucose 6-phosphate (oxidative stage): step 2/3. Bifunctional enzyme localized in the lumen of the endoplasmic reticulum that catalyzes the first two steps of the oxidative branch of the pentose phosphate pathway/shunt, an alternative to glycolysis and a major source of reducing power and metabolic intermediates for biosynthetic processes. Has a hexose-6-phosphate dehydrogenase activity, with broad substrate specificity compared to glucose-6-phosphate 1-dehydrogenase/G6PD, and catalyzes the first step of the pentose phosphate pathway. In addition, acts as a 6-phosphogluconolactonase and catalyzes the second step of the pentose phosphate pathway. May have a dehydrogenase activity for alternative substrates including glucosamine 6-phosphate and glucose 6-sulfate. The main function of this enzyme is to provide reducing equivalents such as NADPH to maintain the adequate levels of reductive cofactors in the oxidizing environment of the endoplasmic reticulum. By producing NADPH that is needed by reductases of the lumen of the endoplasmic reticulum like corticosteroid 11-beta-dehydrogenase isozyme 1/HSD11B1, indirectly regulates their activity. This Oryctolagus cuniculus (Rabbit) protein is GDH/6PGL endoplasmic bifunctional protein.